We begin with the raw amino-acid sequence, 204 residues long: MKDKVRVPFSPDHPSCAPKLFTISAPAGAGKTTLVRMLAQEFPDSFQKTLSLTTRAPRPEEVSGIDYWFVSQEEFKQRLDSNNFLEWVLLFGEYYGTSRLEIDEIWKSGKHAVAVIDVEGALSLKSKIPTVTIFISAPSQEELERRLKYRGSEQDSQRQERLQHSLIEQAASNQFEYVIINDDLQKSYEILKSIFIAEEHRNVL.

In terms of domain architecture, Guanylate kinase-like spans Pro18 to Ile196. Ala25–Thr32 is an ATP binding site.

The protein belongs to the guanylate kinase family.

It localises to the cytoplasm. It carries out the reaction GMP + ATP = GDP + ADP. Functionally, essential for recycling GMP and indirectly, cGMP. The polypeptide is Guanylate kinase (Chlamydia caviae (strain ATCC VR-813 / DSM 19441 / 03DC25 / GPIC) (Chlamydophila caviae)).